The following is a 147-amino-acid chain: Arginine repressor (147 aa).

The protein belongs to the ArgR family.

The protein localises to the cytoplasm. Its pathway is amino-acid biosynthesis; L-arginine biosynthesis [regulation]. In terms of biological role, regulates arginine biosynthesis genes. This Chlamydia caviae (strain ATCC VR-813 / DSM 19441 / 03DC25 / GPIC) (Chlamydophila caviae) protein is Arginine repressor.